A 219-amino-acid chain; its full sequence is Putative ankyrin repeat protein BB_0399 (219 aa).

ANK repeat units lie at residues 104–133 (YKISPISISIINNEFEITKILIDYGISLNQ), 137–166 (TGYSPIFWAIYTNNEKIFEFLKESGADLSF), and 170–199 (NRKTPMQAAIETENIKLIKSLEKKKIYIDD).

The polypeptide is Putative ankyrin repeat protein BB_0399 (Borreliella burgdorferi (strain ATCC 35210 / DSM 4680 / CIP 102532 / B31) (Borrelia burgdorferi)).